The sequence spans 162 residues: MKLDQAARALFLTELVSGFFLAMRYFFKPKATINYPFEKNPISPRFRGEHALRRYPNGEERCIACKLCEAICPAQAITIEAGPRRNDGTRRTTRYDIDMVKCIYCGFCQEACPVDAIVEGPNFEFATETREELYYDKEKLLANGDRWEREIARAIAADAPYR.

2 4Fe-4S ferredoxin-type domains span residues leucine 52–glycine 82 and threonine 93–asparagine 122. The [4Fe-4S] cluster site is built by cysteine 62, cysteine 65, cysteine 68, cysteine 72, cysteine 102, cysteine 105, cysteine 108, and cysteine 112.

This sequence belongs to the complex I 23 kDa subunit family. NDH-1 is composed of 14 different subunits. Subunits NuoA, H, J, K, L, M, N constitute the membrane sector of the complex. [4Fe-4S] cluster is required as a cofactor.

The protein localises to the cell inner membrane. It catalyses the reaction a quinone + NADH + 5 H(+)(in) = a quinol + NAD(+) + 4 H(+)(out). Its function is as follows. NDH-1 shuttles electrons from NADH, via FMN and iron-sulfur (Fe-S) centers, to quinones in the respiratory chain. The immediate electron acceptor for the enzyme in this species is believed to be ubiquinone. Couples the redox reaction to proton translocation (for every two electrons transferred, four hydrogen ions are translocated across the cytoplasmic membrane), and thus conserves the redox energy in a proton gradient. The polypeptide is NADH-quinone oxidoreductase subunit I (Azorhizobium caulinodans (strain ATCC 43989 / DSM 5975 / JCM 20966 / LMG 6465 / NBRC 14845 / NCIMB 13405 / ORS 571)).